Reading from the N-terminus, the 69-residue chain is Conotoxin Eb6.14 (69 aa).

The first 17 residues, 1–17, serve as a signal peptide directing secretion; that stretch reads VLIIAVLFLTACQLTTA. A propeptide spanning residues 18 to 41 is cleaved from the precursor; that stretch reads ETYSRGRQKHRARRSTDKNSKWTR. 3 disulfide bridges follow: Cys-43-Cys-57, Cys-50-Cys-61, and Cys-56-Cys-68.

It belongs to the conotoxin O1 superfamily. In terms of tissue distribution, expressed by the venom duct.

The protein resides in the secreted. In Conus ebraeus (Hebrew cone), this protein is Conotoxin Eb6.14 (E1).